The primary structure comprises 209 residues: Ribonuclease HII (209 aa).

An RNase H type-2 domain is found at 19–209 (CIIVGVDEVG…LPGITKLYSK (191 aa)). Aspartate 25, glutamate 26, and aspartate 118 together coordinate a divalent metal cation.

It belongs to the RNase HII family. Mn(2+) is required as a cofactor. Mg(2+) serves as cofactor.

The protein localises to the cytoplasm. The catalysed reaction is Endonucleolytic cleavage to 5'-phosphomonoester.. Endonuclease that specifically degrades the RNA of RNA-DNA hybrids. This is Ribonuclease HII from Ehrlichia canis (strain Jake).